Here is a 632-residue protein sequence, read N- to C-terminus: Probable potassium transport system protein Kup (632 aa).

12 helical membrane-spanning segments follow: residues 20 to 40 (LLVA…LYTL), 60 to 80 (ILSL…VMFI), 111 to 131 (LMVI…MITP), 146 to 166 (FDGI…ALFL), 178 to 198 (LFGP…VHGI), 216 to 236 (FFIV…LALT), 257 to 277 (WFAL…AILL), 289 to 309 (LLAP…ATVI), 347 to 367 (IYIA…VIGF), 379 to 399 (VAVT…MLLL), 404 to 424 (PVLA…FFAA), and 429 to 449 (IVQG…LMST).

It belongs to the HAK/KUP transporter (TC 2.A.72) family.

Its subcellular location is the cell inner membrane. The catalysed reaction is K(+)(in) + H(+)(in) = K(+)(out) + H(+)(out). Functionally, transport of potassium into the cell. Likely operates as a K(+):H(+) symporter. In Pseudomonas putida (strain W619), this protein is Probable potassium transport system protein Kup.